We begin with the raw amino-acid sequence, 309 residues long: Uricase (309 aa).

At Ala-2 the chain carries N-acetylalanine. Residues Lys-16 and Thr-63 each act as charge relay system in the active site. Thr-63, Asp-64, Phe-165, Arg-182, Val-237, Gln-238, and Asn-264 together coordinate urate. Residue His-266 is the Charge relay system of the active site. Positions 307–309 match the Microbody targeting signal motif; sequence SKL.

This sequence belongs to the uricase family.

The protein resides in the peroxisome. It catalyses the reaction urate + O2 + H2O = 5-hydroxyisourate + H2O2. It participates in purine metabolism; urate degradation; (S)-allantoin from urate: step 1/3. Catalyzes the oxidation of uric acid to 5-hydroxyisourate, which is further processed to form (S)-allantoin. The sequence is that of Uricase from Arabidopsis thaliana (Mouse-ear cress).